The following is a 123-amino-acid chain: Fluoride-specific ion channel FluC (123 aa).

Transmembrane regions (helical) follow at residues M1–A21, L32–F52, F66–F86, and G99–F119. Residues G73 and T76 each contribute to the Na(+) site.

Belongs to the fluoride channel Fluc/FEX (TC 1.A.43) family.

The protein localises to the cell inner membrane. It carries out the reaction fluoride(in) = fluoride(out). With respect to regulation, na(+) is not transported, but it plays an essential structural role and its presence is essential for fluoride channel function. Its function is as follows. Fluoride-specific ion channel. Important for reducing fluoride concentration in the cell, thus reducing its toxicity. This Psychrobacter cryohalolentis (strain ATCC BAA-1226 / DSM 17306 / VKM B-2378 / K5) protein is Fluoride-specific ion channel FluC.